The chain runs to 320 residues: Cytochrome f (320 aa).

The first 35 residues, 1 to 35, serve as a signal peptide directing secretion; the sequence is MQTRKTLSWIKEEITRSISVSLMIYIITGAYISNA. Heme contacts are provided by tyrosine 36, cysteine 56, cysteine 59, and histidine 60. The chain crosses the membrane as a helical span at residues 286–306; sequence VQGLLFFLASVILAQIFLVLK.

The protein belongs to the cytochrome f family. As to quaternary structure, the 4 large subunits of the cytochrome b6-f complex are cytochrome b6, subunit IV (17 kDa polypeptide, petD), cytochrome f and the Rieske protein, while the 4 small subunits are PetG, PetL, PetM and PetN. The complex functions as a dimer. Heme is required as a cofactor.

It is found in the plastid. The protein localises to the chloroplast thylakoid membrane. Its function is as follows. Component of the cytochrome b6-f complex, which mediates electron transfer between photosystem II (PSII) and photosystem I (PSI), cyclic electron flow around PSI, and state transitions. The protein is Cytochrome f of Populus trichocarpa (Western balsam poplar).